Reading from the N-terminus, the 381-residue chain is Guanine nucleotide-binding protein G(s) subunit alpha (381 aa).

Cys3 carries S-palmitoyl cysteine lipidation. The G-alpha domain maps to 36 to 381 (ALHRLLLLGA…RMHLQKYELL (346 aa)). A G1 motif region spans residues 39-52 (RLLLLGAGESGKST). Residues 44–51 (GAGESGKS), 183–189 (LRCRVLT), 208–212 (GVGGQ), 277–280 (NKQD), and Ala353 contribute to the GTP site. Residues Ser51 and Thr189 each contribute to the Mg(2+) site. Residues 181–189 (DILRCRVLT) are G2 motif. The G3 motif stretch occupies residues 204–213 (FYMFGVGGQR). A G4 motif region spans residues 273–280 (ILFLNKQD). Residues 351-356 (TTAVDT) form a G5 motif region.

This sequence belongs to the G-alpha family. G(s) subfamily. In terms of assembly, g proteins are composed of 3 units; alpha, beta and gamma. The alpha chain contains the guanine nucleotide binding site.

Its function is as follows. Guanine nucleotide-binding proteins (G proteins) are involved as modulators or transducers in various transmembrane signaling systems. The G(s) protein is involved in hormonal regulation of adenylate cyclase: it activates the cyclase in response to beta-adrenergic stimuli. This Geodia cydonium (Sponge) protein is Guanine nucleotide-binding protein G(s) subunit alpha.